The primary structure comprises 98 residues: NADH-ubiquinone oxidoreductase chain 4L (98 aa).

The next 3 membrane-spanning stretches (helical) occupy residues 2 to 22 (PSIS…MLVF), 29 to 49 (SLLC…LTIM), and 61 to 81 (ILLL…LVMM).

Belongs to the complex I subunit 4L family. In terms of assembly, core subunit of respiratory chain NADH dehydrogenase (Complex I) which is composed of 45 different subunits.

It is found in the mitochondrion inner membrane. The catalysed reaction is a ubiquinone + NADH + 5 H(+)(in) = a ubiquinol + NAD(+) + 4 H(+)(out). In terms of biological role, core subunit of the mitochondrial membrane respiratory chain NADH dehydrogenase (Complex I) which catalyzes electron transfer from NADH through the respiratory chain, using ubiquinone as an electron acceptor. Part of the enzyme membrane arm which is embedded in the lipid bilayer and involved in proton translocation. The sequence is that of NADH-ubiquinone oxidoreductase chain 4L (MT-ND4L) from Lepilemur seali (Seal's sportive lemur).